The following is a 200-amino-acid chain: Protein GrpE (200 aa).

Basic and acidic residues predominate over residues 1–12; it reads MSNEEIKNKDEQ. The tract at residues 1 to 30 is disordered; that stretch reads MSNEEIKNKDEQLQQDAVETEAEVVGTDAD.

Belongs to the GrpE family. In terms of assembly, homodimer.

Its subcellular location is the cytoplasm. Participates actively in the response to hyperosmotic and heat shock by preventing the aggregation of stress-denatured proteins, in association with DnaK and GrpE. It is the nucleotide exchange factor for DnaK and may function as a thermosensor. Unfolded proteins bind initially to DnaJ; upon interaction with the DnaJ-bound protein, DnaK hydrolyzes its bound ATP, resulting in the formation of a stable complex. GrpE releases ADP from DnaK; ATP binding to DnaK triggers the release of the substrate protein, thus completing the reaction cycle. Several rounds of ATP-dependent interactions between DnaJ, DnaK and GrpE are required for fully efficient folding. This is Protein GrpE from Vibrio cholerae serotype O1 (strain ATCC 39315 / El Tor Inaba N16961).